The primary structure comprises 926 residues: Protein transport protein SEC24-2 (926 aa).

Residues 1–54 (MSHHKKRVYPQAQAQYGQSATPLQQPAQLVPPQDPAAAGMSYAQMGMPPQGAAA) form a disordered region. The segment covering 20 to 54 (ATPLQQPAQLVPPQDPAAAGMSYAQMGMPPQGAAA) has biased composition (low complexity). Residues Cys231, Cys234, Cys253, and Cys256 each coordinate Zn(2+). The tract at residues 231 to 256 (CRRCRSYMNPFITFIEQGRRWRCNFC) is zinc finger-like.

This sequence belongs to the SEC23/SEC24 family. SEC24 subfamily. The COPII coat is composed of at least 5 proteins: the SEC23/24 complex, the SEC13/31 complex, and the protein SAR1. Golgi apparatus membrane; Peripheral membrane protein; Cytoplasmic side.

It localises to the cytoplasm. Its subcellular location is the cytoplasmic vesicle. The protein resides in the COPII-coated vesicle membrane. The protein localises to the endoplasmic reticulum membrane. It is found in the golgi apparatus membrane. Component of the coat protein complex II (COPII) which promotes the formation of transport vesicles from the endoplasmic reticulum (ER). The coat has two main functions, the physical deformation of the endoplasmic reticulum membrane into vesicles and the selection of cargo molecules. The chain is Protein transport protein SEC24-2 (SEC242) from Saccharomyces uvarum (strain ATCC 76518 / CBS 7001 / CLIB 283 / NBRC 10550 / MCYC 623 / NCYC 2669 / NRRL Y-11845) (Yeast).